A 153-amino-acid chain; its full sequence is Nucleoside diphosphate kinase 3 (153 aa).

6 residues coordinate ATP: Lys11, Phe59, Arg87, Thr93, Arg104, and Asn114. His117 serves as the catalytic Pros-phosphohistidine intermediate.

Belongs to the NDK family. Homohexamer. Mg(2+) is required as a cofactor.

It is found in the plastid. It localises to the chloroplast thylakoid lumen. It catalyses the reaction a 2'-deoxyribonucleoside 5'-diphosphate + ATP = a 2'-deoxyribonucleoside 5'-triphosphate + ADP. The enzyme catalyses a ribonucleoside 5'-diphosphate + ATP = a ribonucleoside 5'-triphosphate + ADP. Functionally, major role in the synthesis of nucleoside triphosphates other than ATP. The ATP gamma phosphate is transferred to the NDP beta phosphate via a ping-pong mechanism, using a phosphorylated active-site intermediate. Shows the highest specificity towards GDP. The polypeptide is Nucleoside diphosphate kinase 3 (Spinacia oleracea (Spinach)).